A 371-amino-acid polypeptide reads, in one-letter code: MIDLRSPNALLSDYVERYAHLSPEPSRQLQQRMDYNVRADAPAEPASKPRWLQSRACTLTPEQALDRAKGALLGLAIGDAVGTTLEFLPRDREHVNDMVGGGPFRLAAGEWTDDTSMALCLADTYVSQGKFDYATYANALVRWYRHGENSVNGRCFDIGNATRNALEGWLREGIGWQGNYDPSTAGNGSIIRLAPTAIFRRHSLSASWWESVTQSSVTHNADEAVNCCQLLAAQLHLALNGADKEETLAPAVRSLRPRPMIINAGEYKQKSRDQIRSSGYVVDTLEAALWAVWNSNNFHDAILLAANLADDADSVAATAGQLAGALYGVSGMPPEWVEKVAWSQHIQKLAQELFDRAPQVDELDALLYGKR.

The segment at 1–61 (MIDLRSPNAL…LQSRACTLTP (61 aa)) is N-terminal extension. The interval 70–362 (GALLGLAIGD…LFDRAPQVDE (293 aa)) is ADP-ribosyl hydrolase domain. T112, D113, D114, D157, and D313 together coordinate Mg(2+).

The protein belongs to the ADP-ribosylglycohydrolase family. Mg(2+) serves as cofactor.

The catalysed reaction is N(omega)-(ADP-D-ribosyl)-L-arginyl-[protein] + H2O = ADP-D-ribose + L-arginyl-[protein]. Its function is as follows. Immunity component of an interbacterial competition system (also called effector-immunity systems). Expression in E.coli neutralizes the toxic effects of non-cognate S.proteamaculans effector protein Tre1 (Tre1-Sp); cannot be co-purified with Tre1-Sp from E.coli, suggesting they do not form a stable complex. Probably acts as an arginine mono-ADP-ribosylhydrolase, mediating the removal of mono-ADP-ribose attached to arginine residues on proteins. Probably de-ADP-ribosylates FtsZ and possibly other proteins; the ability to hydrolyze ADP-ribosyl moieties is not essential for neutralization of its cognate toxin, strongly suggesting its N-terminal extension occludes the active site of cognate toxin Tre1. In Pseudomonas putida (strain GB-1), this protein is ADP-ribosylarginine hydrolase Tri1.